Reading from the N-terminus, the 704-residue chain is Seven transmembrane domain-containing serine/threonine-protein kinase 2 (704 aa).

At 1-5 the chain is on the extracellular side; it reads MPSKE. The chain crosses the membrane as a helical span at residues 6–26; the sequence is FIIPLILLCFYSVNGFVAVIS. Over 27-42 the chain is Cytoplasmic; the sequence is SLVELFIHKASWNSIK. The helical transmembrane segment at 43–63 threads the bilayer; sequence IFFYSLLILQCLCRCIIIGWG. Residues 64-76 lie on the Extracellular side of the membrane; sequence MIETVQGGEFYSN. A helical membrane pass occupies residues 77–97; the sequence is FPSLLFISYAGLVALQMIQFL. At 98 to 121 the chain is on the cytoplasmic side; that stretch reads PNDNQYLLLSEGKKNNHKVKVGTN. Residues 122–142 traverse the membrane as a helical segment; sequence ILIFFNLFMYFGMFLLFGIAE. Residues 143-185 are Extracellular-facing; that stretch reads KQVGNSTSFNHHGNHNSTTSTSTDEIPLVSTEVGELYLFGDKD. N-linked (GlcNAc...) asparagine glycans are attached at residues asparagine 147 and asparagine 158. A helical transmembrane segment spans residues 186–206; it reads PIYIVLDCFYFVCLLLLLIFH. Residues 207–224 are Cytoplasmic-facing; that stretch reads SYVGWKTYKRNKDLFGIK. A helical transmembrane segment spans residues 225–245; the sequence is LNVIHLILLICIFIRSLLVII. Topologically, residues 246–265 are extracellular; sequence DPSSPNNSILHIDTESWLIY. N-linked (GlcNAc...) asparagine glycosylation is present at asparagine 251. A helical membrane pass occupies residues 266-286; it reads IYTISYYVVGEIIPGMLLIVI. Over 287-704 the chain is Cytoplasmic; it reads EFLLPYHKRK…WSIEKDSSSK (418 aa). Residues 317–682 form the Protein kinase domain; it reads IAIHELLGMG…SLGVKFHLAN (366 aa). ATP contacts are provided by residues 323–331 and lysine 350; that span reads LGMGGSGAM. Aspartate 506 serves as the catalytic Proton acceptor.

This sequence belongs to the protein kinase superfamily. Ser/Thr protein kinase family.

It is found in the membrane. The catalysed reaction is L-seryl-[protein] + ATP = O-phospho-L-seryl-[protein] + ADP + H(+). It catalyses the reaction L-threonyl-[protein] + ATP = O-phospho-L-threonyl-[protein] + ADP + H(+). This is Seven transmembrane domain-containing serine/threonine-protein kinase 2 (7tmk2) from Dictyostelium discoideum (Social amoeba).